Reading from the N-terminus, the 460-residue chain is Transcriptional regulatory protein UME1 (460 aa).

Residues Asn14–Lys22 carry the NEE-box motif. WD repeat units lie at residues Pro233–Trp271, Ser276–Asp316, Phe339–Asn379, and Gly411–Gly451.

Component of the RPD3C(L) complex composed of at least ASH1, CTI6, DEP1, PHO23, RPD3, RXT2, RXT3, SAP30, SDS3, SIN3, UME1 and UME6. Component of the RPD3C(S) complex composed of at least EAF3, RCO1, RPD3, SIN3, and UME1. Interacts with RPD3.

It is found in the cytoplasm. It localises to the nucleus. Its function is as follows. Catalytic component of the RPD3 histone deacetylase complexes RPD3C(L) and RPD3C(S) responsible for the deacetylation of lysine residues on the N-terminal part of the core histones (H2A, H2B, H3 and H4). Histone deacetylation gives a tag for epigenetic repression and plays an important role in transcriptional regulation, cell cycle progression and developmental events. This is Transcriptional regulatory protein UME1 (UME1) from Saccharomyces cerevisiae (strain ATCC 204508 / S288c) (Baker's yeast).